Here is a 256-residue protein sequence, read N- to C-terminus: Probable ribosomal RNA small subunit methyltransferase A (256 aa).

S-adenosyl-L-methionine contacts are provided by histidine 8, leucine 10, glycine 34, glutamate 55, aspartate 83, and asparagine 98.

The protein belongs to the class I-like SAM-binding methyltransferase superfamily. rRNA adenine N(6)-methyltransferase family. RsmA subfamily.

It is found in the cytoplasm. Its function is as follows. Specifically dimethylates two adjacent adenosines in the loop of a conserved hairpin near the 3'-end of 16S rRNA in the 30S particle. May play a critical role in biogenesis of 30S subunits. This chain is Probable ribosomal RNA small subunit methyltransferase A, found in Methanospirillum hungatei JF-1 (strain ATCC 27890 / DSM 864 / NBRC 100397 / JF-1).